The sequence spans 346 residues: Holliday junction branch migration complex subunit RuvB (346 aa).

The segment at 1–182 (MKIELLTTPA…FGINSRFDYY (182 aa)) is large ATPase domain (RuvB-L). Residues Ile-21, Arg-22, Gly-63, Lys-66, Thr-67, Thr-68, 129 to 131 (EDF), Arg-172, Tyr-182, and Arg-219 contribute to the ATP site. Position 67 (Thr-67) interacts with Mg(2+). Residues 183–253 (SPDLLEGIVM…IAMKTLECLD (71 aa)) form a small ATPAse domain (RuvB-S) region. A head domain (RuvB-H) region spans residues 256-346 (EEGLDDMDKK…GLFDADGNLS (91 aa)). Arg-311 and Arg-316 together coordinate DNA.

This sequence belongs to the RuvB family. As to quaternary structure, homohexamer. Forms an RuvA(8)-RuvB(12)-Holliday junction (HJ) complex. HJ DNA is sandwiched between 2 RuvA tetramers; dsDNA enters through RuvA and exits via RuvB. An RuvB hexamer assembles on each DNA strand where it exits the tetramer. Each RuvB hexamer is contacted by two RuvA subunits (via domain III) on 2 adjacent RuvB subunits; this complex drives branch migration. In the full resolvosome a probable DNA-RuvA(4)-RuvB(12)-RuvC(2) complex forms which resolves the HJ.

It is found in the cytoplasm. The catalysed reaction is ATP + H2O = ADP + phosphate + H(+). In terms of biological role, the RuvA-RuvB-RuvC complex processes Holliday junction (HJ) DNA during genetic recombination and DNA repair, while the RuvA-RuvB complex plays an important role in the rescue of blocked DNA replication forks via replication fork reversal (RFR). RuvA specifically binds to HJ cruciform DNA, conferring on it an open structure. The RuvB hexamer acts as an ATP-dependent pump, pulling dsDNA into and through the RuvAB complex. RuvB forms 2 homohexamers on either side of HJ DNA bound by 1 or 2 RuvA tetramers; 4 subunits per hexamer contact DNA at a time. Coordinated motions by a converter formed by DNA-disengaged RuvB subunits stimulates ATP hydrolysis and nucleotide exchange. Immobilization of the converter enables RuvB to convert the ATP-contained energy into a lever motion, pulling 2 nucleotides of DNA out of the RuvA tetramer per ATP hydrolyzed, thus driving DNA branch migration. The RuvB motors rotate together with the DNA substrate, which together with the progressing nucleotide cycle form the mechanistic basis for DNA recombination by continuous HJ branch migration. Branch migration allows RuvC to scan DNA until it finds its consensus sequence, where it cleaves and resolves cruciform DNA. The sequence is that of Holliday junction branch migration complex subunit RuvB from Chlorobium phaeovibrioides (strain DSM 265 / 1930) (Prosthecochloris vibrioformis (strain DSM 265)).